Consider the following 203-residue polypeptide: 5-formyltetrahydrofolate cyclo-ligase (203 aa).

Ala-2 carries the post-translational modification N-acetylalanine. ATP is bound by residues Lys-10–Arg-14 and Arg-14. Substrate is bound by residues Leu-56, Glu-61, and Arg-148 to Tyr-152. An ATP-binding site is contributed by Arg-145–Tyr-153. Residues Asp-154 and Asp-189 each contribute to the Mg(2+) site.

This sequence belongs to the 5-formyltetrahydrofolate cyclo-ligase family. As to quaternary structure, monomer. Mg(2+) serves as cofactor.

Its subcellular location is the cytoplasm. It carries out the reaction (6S)-5-formyl-5,6,7,8-tetrahydrofolate + ATP = (6R)-5,10-methenyltetrahydrofolate + ADP + phosphate. Its function is as follows. Contributes to tetrahydrofolate metabolism. Helps regulate carbon flow through the folate-dependent one-carbon metabolic network that supplies carbon for the biosynthesis of purines, thymidine and amino acids. Catalyzes the irreversible conversion of 5-formyltetrahydrofolate (5-CHO-H(4)PteGlu) to yield 5,10-methenyltetrahydrofolate. The sequence is that of 5-formyltetrahydrofolate cyclo-ligase (Mthfs) from Mus musculus (Mouse).